Consider the following 461-residue polypeptide: Bifunctional protein GlmU (461 aa).

The tract at residues 1–229 (MNKYVVILAA…FSESLGVNDR (229 aa)) is pyrophosphorylase. UDP-N-acetyl-alpha-D-glucosamine contacts are provided by residues 8 to 11 (LAAG), Lys-22, Gln-72, and 77 to 78 (GT). A Mg(2+)-binding site is contributed by Asp-102. UDP-N-acetyl-alpha-D-glucosamine-binding residues include Gly-139, Glu-154, Asn-169, and Asn-227. Asn-227 is a binding site for Mg(2+). Positions 230–250 (IALAQATKIMQRRINEEHMKN) are linker. The interval 251 to 461 (GVSFIDPDTA…LPLSKDKEWE (211 aa)) is N-acetyltransferase. Arg-332 and Lys-350 together coordinate UDP-N-acetyl-alpha-D-glucosamine. His-362 functions as the Proton acceptor in the catalytic mechanism. UDP-N-acetyl-alpha-D-glucosamine-binding residues include Tyr-365 and Asn-376. Acetyl-CoA contacts are provided by residues 385-386 (NY), Ala-422, and Arg-439.

It in the N-terminal section; belongs to the N-acetylglucosamine-1-phosphate uridyltransferase family. The protein in the C-terminal section; belongs to the transferase hexapeptide repeat family. In terms of assembly, homotrimer. The cofactor is Mg(2+).

It is found in the cytoplasm. It carries out the reaction alpha-D-glucosamine 1-phosphate + acetyl-CoA = N-acetyl-alpha-D-glucosamine 1-phosphate + CoA + H(+). It catalyses the reaction N-acetyl-alpha-D-glucosamine 1-phosphate + UTP + H(+) = UDP-N-acetyl-alpha-D-glucosamine + diphosphate. Its pathway is nucleotide-sugar biosynthesis; UDP-N-acetyl-alpha-D-glucosamine biosynthesis; N-acetyl-alpha-D-glucosamine 1-phosphate from alpha-D-glucosamine 6-phosphate (route II): step 2/2. It functions in the pathway nucleotide-sugar biosynthesis; UDP-N-acetyl-alpha-D-glucosamine biosynthesis; UDP-N-acetyl-alpha-D-glucosamine from N-acetyl-alpha-D-glucosamine 1-phosphate: step 1/1. It participates in bacterial outer membrane biogenesis; LPS lipid A biosynthesis. In terms of biological role, catalyzes the last two sequential reactions in the de novo biosynthetic pathway for UDP-N-acetylglucosamine (UDP-GlcNAc). The C-terminal domain catalyzes the transfer of acetyl group from acetyl coenzyme A to glucosamine-1-phosphate (GlcN-1-P) to produce N-acetylglucosamine-1-phosphate (GlcNAc-1-P), which is converted into UDP-GlcNAc by the transfer of uridine 5-monophosphate (from uridine 5-triphosphate), a reaction catalyzed by the N-terminal domain. This chain is Bifunctional protein GlmU, found in Lactobacillus gasseri (strain ATCC 33323 / DSM 20243 / BCRC 14619 / CIP 102991 / JCM 1131 / KCTC 3163 / NCIMB 11718 / NCTC 13722 / AM63).